The following is a 377-amino-acid chain: Phosphatidylglycerol--prolipoprotein diacylglyceryl transferase (377 aa).

The next 4 helical transmembrane spans lie at 18–38 (PVPL…AVVV), 48–68 (MDPA…IVGA), 93–113 (IWNG…GAWL), and 119–139 (GISL…AQAI). A 1,2-diacyl-sn-glycero-3-phospho-(1'-sn-glycerol) is bound at residue arginine 141. 3 consecutive transmembrane segments (helical) span residues 177-197 (QPTF…LLLV), 208-228 (LFAL…MLRI), and 238-258 (RVNI…LLVV). Residues 265–377 (DVSPQEQRAL…RTRVERPPAT (113 aa)) form a disordered region. Low complexity-rich tracts occupy residues 288 to 297 (AAGETAGETR) and 308 to 344 (GVDV…DADG).

Belongs to the Lgt family.

Its subcellular location is the cell membrane. It carries out the reaction L-cysteinyl-[prolipoprotein] + a 1,2-diacyl-sn-glycero-3-phospho-(1'-sn-glycerol) = an S-1,2-diacyl-sn-glyceryl-L-cysteinyl-[prolipoprotein] + sn-glycerol 1-phosphate + H(+). Its pathway is protein modification; lipoprotein biosynthesis (diacylglyceryl transfer). In terms of biological role, catalyzes the transfer of the diacylglyceryl group from phosphatidylglycerol to the sulfhydryl group of the N-terminal cysteine of a prolipoprotein, the first step in the formation of mature lipoproteins. This Frankia alni (strain DSM 45986 / CECT 9034 / ACN14a) protein is Phosphatidylglycerol--prolipoprotein diacylglyceryl transferase.